Reading from the N-terminus, the 229-residue chain is uncharacterized protein (229 aa).

Helical transmembrane passes span 1–21 (MFGT…GGIF), 32–52 (ILMQ…ITQH), 58–78 (YPIL…IINL), 100–120 (TAVL…EAAL), 139–159 (IVLA…LFSW), 178–198 (LINE…LSIL), and 206–226 (LNLL…HAFG).

It localises to the cell membrane. This is an uncharacterized protein from Bacillus subtilis (strain 168).